The sequence spans 375 residues: Protein arginine N-methyltransferase 6 (375 aa).

A disordered region spans residues Met1–Arg38. The residue at position 21 (Thr21) is a Phosphothreonine. Residues Glu28–Arg38 are compositionally biased toward basic and acidic residues. Asymmetric dimethylarginine; by autocatalysis is present on residues Arg29, Arg35, and Arg37. An SAM-dependent MTase PRMT-type domain is found at Asp44 to Glu374. S-adenosyl-L-methionine-binding residues include His57, Arg66, Gly90, Glu112, and Glu141. Catalysis depends on residues Glu155 and Glu164.

Belongs to the class I-like SAM-binding methyltransferase superfamily. Protein arginine N-methyltransferase family. PRMT6 subfamily. Interacts with EPB41L3 and NCOA1. As to quaternary structure, (Microbial infection) Interacts with (and methylates) HIV-1 Tat, Rev and Nucleocapsid protein p7 (NC). In terms of assembly, (Microbial infection) Interacts with human cytomegalovirus protein UL69. In terms of processing, automethylation enhances its stability and antiretroviral activity. In terms of tissue distribution, highly expressed in kidney and testis.

The protein resides in the nucleus. The enzyme catalyses L-arginyl-[protein] + 2 S-adenosyl-L-methionine = N(omega),N(omega)-dimethyl-L-arginyl-[protein] + 2 S-adenosyl-L-homocysteine + 2 H(+). Arginine methyltransferase that can catalyze the formation of both omega-N monomethylarginine (MMA) and asymmetrical dimethylarginine (aDMA), with a strong preference for the formation of aDMA. Preferentially methylates arginyl residues present in a glycine and arginine-rich domain and displays preference for monomethylated substrates. Specifically mediates the asymmetric dimethylation of histone H3 'Arg-2' to form H3R2me2a. H3R2me2a represents a specific tag for epigenetic transcriptional repression and is mutually exclusive with methylation on histone H3 'Lys-4' (H3K4me2 and H3K4me3). Acts as a transcriptional repressor of various genes such as HOXA2, THBS1 and TP53. Repression of TP53 blocks cellular senescence. Also methylates histone H2A and H4 'Arg-3' (H2AR3me and H4R3me, respectively). Acts as a regulator of DNA base excision during DNA repair by mediating the methylation of DNA polymerase beta (POLB), leading to the stimulation of its polymerase activity by enhancing DNA binding and processivity. Methylates HMGA1. Regulates alternative splicing events. Acts as a transcriptional coactivator of a number of steroid hormone receptors including ESR1, ESR2, PGR and NR3C1. Promotes fasting-induced transcriptional activation of the gluconeogenic program through methylation of the CRTC2 transcription coactivator. May play a role in innate immunity against HIV-1 in case of infection by methylating and impairing the function of various HIV-1 proteins such as Tat, Rev and Nucleocapsid protein p7 (NC). Methylates GPS2, protecting GPS2 from ubiquitination and degradation. Methylates SIRT7, inhibiting SIRT7 histone deacetylase activity and promoting mitochondria biogenesis. In Homo sapiens (Human), this protein is Protein arginine N-methyltransferase 6 (PRMT6).